Consider the following 251-residue polypeptide: Cobalt transport protein CbiM (251 aa).

The first 27 residues, 1–27 (MNKKKNTILIGLYFLVGIMLFPDRIYA), serve as a signal peptide directing secretion. The next 6 membrane-spanning stretches (helical) occupy residues 35-55 (LPVK…ALGI), 66-86 (GPGI…LSSL), 103-123 (LGAI…VLIF), 131-151 (GGLT…PFVA), 166-186 (WLSV…TTAT), and 208-228 (VFAT…VLIF).

It belongs to the CbiM family. As to quaternary structure, forms an energy-coupling factor (ECF) transporter complex composed of an ATP-binding protein (A component, CbiO), a transmembrane protein (T component, CbiQ) and 2 possible substrate-capture proteins (S components, CbiM and CbiN) of unknown stoichimetry.

Its subcellular location is the cell membrane. The protein operates within cofactor biosynthesis; adenosylcobalamin biosynthesis. In terms of biological role, part of the energy-coupling factor (ECF) transporter complex CbiMNOQ involved in cobalt import. The chain is Cobalt transport protein CbiM from Acetohalobium arabaticum (strain ATCC 49924 / DSM 5501 / Z-7288).